Consider the following 172-residue polypeptide: Putative B3 domain-containing protein At1g05615 (172 aa).

The segment at residues 69-169 is a DNA-binding region (TF-B3); sequence VDEGKIIDFE…NLAMVPLTPT (101 aa).

It is found in the nucleus. This is Putative B3 domain-containing protein At1g05615 from Arabidopsis thaliana (Mouse-ear cress).